A 226-amino-acid chain; its full sequence is N-(5'-phosphoribosyl)anthranilate isomerase (226 aa).

The protein belongs to the TrpF family.

It catalyses the reaction N-(5-phospho-beta-D-ribosyl)anthranilate = 1-(2-carboxyphenylamino)-1-deoxy-D-ribulose 5-phosphate. It functions in the pathway amino-acid biosynthesis; L-tryptophan biosynthesis; L-tryptophan from chorismate: step 3/5. The chain is N-(5'-phosphoribosyl)anthranilate isomerase (TRP1) from Candida albicans (strain SC5314 / ATCC MYA-2876) (Yeast).